The chain runs to 248 residues: tRNA pseudouridine synthase A (248 aa).

Aspartate 53 serves as the catalytic Nucleophile. Substrate is bound at residue tyrosine 111.

Belongs to the tRNA pseudouridine synthase TruA family. As to quaternary structure, homodimer.

It catalyses the reaction uridine(38/39/40) in tRNA = pseudouridine(38/39/40) in tRNA. In terms of biological role, formation of pseudouridine at positions 38, 39 and 40 in the anticodon stem and loop of transfer RNAs. This chain is tRNA pseudouridine synthase A, found in Listeria innocua serovar 6a (strain ATCC BAA-680 / CLIP 11262).